A 46-amino-acid polypeptide reads, in one-letter code: Daisho2 (46 aa).

The signal sequence occupies residues 1–22; that stretch reads MNCLKICGFFFALIAALATAEA.

As to expression, hemolymph (at protein level).

The protein localises to the secreted. In terms of biological role, peptide which plays a role in the humoral immune response to a subset of filamentous fungi, including F.oxysporum and F.verticillioides. The chain is Daisho2 from Drosophila melanogaster (Fruit fly).